Consider the following 197-residue polypeptide: Holliday junction branch migration complex subunit RuvA (197 aa).

The segment at 1–63 (MFEYLNGKLV…EDAHSLYGFV (63 aa)) is domain I. The tract at residues 64–142 (NESEKALFLR…ATGAVGISLL (79 aa)) is domain II. Residues 142–146 (LDAAP) are flexible linker. The segment at 147–197 (ASNLALEEAIEALQALGYKATELKKIEKKLAQEAGLTSEEYIKSALKLMMK) is domain III.

The protein belongs to the RuvA family. As to quaternary structure, homotetramer. Forms an RuvA(8)-RuvB(12)-Holliday junction (HJ) complex. HJ DNA is sandwiched between 2 RuvA tetramers; dsDNA enters through RuvA and exits via RuvB. An RuvB hexamer assembles on each DNA strand where it exits the tetramer. Each RuvB hexamer is contacted by two RuvA subunits (via domain III) on 2 adjacent RuvB subunits; this complex drives branch migration. In the full resolvosome a probable DNA-RuvA(4)-RuvB(12)-RuvC(2) complex forms which resolves the HJ.

The protein resides in the cytoplasm. The RuvA-RuvB-RuvC complex processes Holliday junction (HJ) DNA during genetic recombination and DNA repair, while the RuvA-RuvB complex plays an important role in the rescue of blocked DNA replication forks via replication fork reversal (RFR). RuvA specifically binds to HJ cruciform DNA, conferring on it an open structure. The RuvB hexamer acts as an ATP-dependent pump, pulling dsDNA into and through the RuvAB complex. HJ branch migration allows RuvC to scan DNA until it finds its consensus sequence, where it cleaves and resolves the cruciform DNA. The sequence is that of Holliday junction branch migration complex subunit RuvA from Lactococcus lactis subsp. cremoris (strain MG1363).